A 289-amino-acid polypeptide reads, in one-letter code: Ribosome-inactivating protein alpha-trichosanthin (289 aa).

Positions 1-23 (MIRFLVLSLLILTLFLTTPAVEG) are cleaved as a signal peptide. Glu183 is an active-site residue. The propeptide at 271–289 (AMDDDVPMTQSFGCGSYAI) is removed in mature form.

Belongs to the ribosome-inactivating protein family. Type 1 RIP subfamily.

The enzyme catalyses Endohydrolysis of the N-glycosidic bond at one specific adenosine on the 28S rRNA.. Its function is as follows. Inactivates eukaryotic 60S ribosomal subunits. The polypeptide is Ribosome-inactivating protein alpha-trichosanthin (Trichosanthes kirilowii (Chinese snake gourd)).